An 88-amino-acid polypeptide reads, in one-letter code: Small ribosomal subunit protein uS15 (88 aa).

It belongs to the universal ribosomal protein uS15 family. Part of the 30S ribosomal subunit. Forms a bridge to the 50S subunit in the 70S ribosome, contacting the 23S rRNA.

Its function is as follows. One of the primary rRNA binding proteins, it binds directly to 16S rRNA where it helps nucleate assembly of the platform of the 30S subunit by binding and bridging several RNA helices of the 16S rRNA. Forms an intersubunit bridge (bridge B4) with the 23S rRNA of the 50S subunit in the ribosome. The sequence is that of Small ribosomal subunit protein uS15 from Variovorax paradoxus (strain S110).